We begin with the raw amino-acid sequence, 497 residues long: Glycerol kinase (497 aa).

Thr11 serves as a coordination point for ADP. Residues Thr11, Ser12, and Ser13 each contribute to the ATP site. Residue Thr11 coordinates sn-glycerol 3-phosphate. Arg15 provides a ligand contact to ADP. Sn-glycerol 3-phosphate-binding residues include Arg81, Glu82, Tyr133, and Asp242. 5 residues coordinate glycerol: Arg81, Glu82, Tyr133, Asp242, and Gln243. Residues Thr264 and Gly307 each contribute to the ADP site. ATP is bound by residues Thr264, Gly307, Gln311, and Gly412. Residues Gly412 and Asn416 each coordinate ADP.

This sequence belongs to the FGGY kinase family.

It catalyses the reaction glycerol + ATP = sn-glycerol 3-phosphate + ADP + H(+). It participates in polyol metabolism; glycerol degradation via glycerol kinase pathway; sn-glycerol 3-phosphate from glycerol: step 1/1. Inhibited by fructose 1,6-bisphosphate (FBP). Functionally, key enzyme in the regulation of glycerol uptake and metabolism. Catalyzes the phosphorylation of glycerol to yield sn-glycerol 3-phosphate. The polypeptide is Glycerol kinase (Polaromonas sp. (strain JS666 / ATCC BAA-500)).